The sequence spans 809 residues: Spindle pole body component alp14 (809 aa).

2 HEAT repeats span residues 127-164 (DSAA…QFGA) and 167-204 (IPSK…WTGD). Disordered regions lie at residues 233-274 (PPKQ…SDDQ), 507-608 (AKAP…SGAL), and 619-638 (ELDD…RYEH). Residues 239–253 (FLKSQQPTSEPNVET) are compositionally biased toward polar residues. Acidic residues predominate over residues 262 to 274 (ENEESEPEPSDDQ). A compositionally biased stretch (basic residues) spans 509-518 (APTKKSKVKP). Low complexity-rich tracts occupy residues 526–551 (VVVP…SPRK) and 582–595 (SRGL…SLQQ). 2 positions are modified to phosphoserine: Ser543 and Ser548. A compositionally biased stretch (polar residues) spans 597–608 (VKASTPLNSGAL). Residues 637–697 (EHPKVLEDND…NTLRSARKAS (61 aa)) adopt a coiled-coil conformation. Phosphoserine occurs at positions 697 and 720.

The protein belongs to the TOG/XMAP215 family. As to quaternary structure, interacts with alp14.

The protein resides in the cytoplasm. Its subcellular location is the cytoskeleton. It is found in the microtubule organizing center. It localises to the spindle pole body. The protein localises to the chromosome. The protein resides in the centromere. Its subcellular location is the kinetochore. Functionally, required for bipolar spindle formation and proper chromosome segregation. Has a role in connecting the kinetochores and the plus end of pole to chromosome microtubules. Also required for the activation of the spindle checkpoint pathway. This Schizosaccharomyces pombe (strain 972 / ATCC 24843) (Fission yeast) protein is Spindle pole body component alp14 (alp14).